The sequence spans 203 residues: Large ribosomal subunit protein bL25 (203 aa).

This sequence belongs to the bacterial ribosomal protein bL25 family. CTC subfamily. As to quaternary structure, part of the 50S ribosomal subunit; part of the 5S rRNA/L5/L18/L25 subcomplex. Contacts the 5S rRNA. Binds to the 5S rRNA independently of L5 and L18.

Functionally, this is one of the proteins that binds to the 5S RNA in the ribosome where it forms part of the central protuberance. The polypeptide is Large ribosomal subunit protein bL25 (Dechloromonas aromatica (strain RCB)).